We begin with the raw amino-acid sequence, 213 residues long: Golgi to ER traffic protein 1 (213 aa).

At 1–4 the chain is on the lumenal side; that stretch reads MESW. A helical membrane pass occupies residues 5 to 25; the sequence is LLVILAFLVLERLWPLIDSLI. At 26 to 98 the chain is on the cytoplasmic side; that stretch reads QRFAQANSTK…RTKASLKKVK (73 aa). Residues 55-99 are a coiled coil; it reads AQDQYVKWTKNNRTLEKINKQIEEEKKQLLSQVDRTKASLKKVKL. The chain crosses the membrane as a helical span at residues 99 to 119; sequence LVLITVPFTILKFYKGKMPIY. Residues 120-158 lie on the Lumenal side of the membrane; that stretch reads DLPKGLFPNYLQGLFQHGWVYLALGPLNIKKVGDGTHVT. Residues 159-175 traverse the membrane as a helical segment; it reads VSLAIWLFALLKVVSTL. The Cytoplasmic segment spans residues 176–213; sequence GNIWESLTAPAIPAPTITTDPIDQTNESEKPPVDQPVD. The disordered stretch occupies residues 193–213; the sequence is TTDPIDQTNESEKPPVDQPVD.

Belongs to the WRB/GET1 family. In terms of assembly, component of the Golgi to ER traffic (GET) complex, which is composed of GET1, GET2 and GET3. Within the complex, GET1 and GET2 form a heterotetramer which is stabilized by phosphatidylinositol binding and which binds to the GET3 homodimer.

It is found in the endoplasmic reticulum membrane. The protein localises to the golgi apparatus membrane. Required for the post-translational delivery of tail-anchored (TA) proteins to the endoplasmic reticulum. Together with GET2, acts as a membrane receptor for soluble GET3, which recognizes and selectively binds the transmembrane domain of TA proteins in the cytosol. The GET complex cooperates with the HDEL receptor ERD2 to mediate the ATP-dependent retrieval of resident ER proteins that contain a C-terminal H-D-E-L retention signal from the Golgi to the ER. The chain is Golgi to ER traffic protein 1 from Kluyveromyces lactis (strain ATCC 8585 / CBS 2359 / DSM 70799 / NBRC 1267 / NRRL Y-1140 / WM37) (Yeast).